A 172-amino-acid chain; its full sequence is Protein-export protein SecB (172 aa).

This sequence belongs to the SecB family. Homotetramer, a dimer of dimers. One homotetramer interacts with 1 SecA dimer.

The protein localises to the cytoplasm. Its function is as follows. One of the proteins required for the normal export of preproteins out of the cell cytoplasm. It is a molecular chaperone that binds to a subset of precursor proteins, maintaining them in a translocation-competent state. It also specifically binds to its receptor SecA. The chain is Protein-export protein SecB from Xylella fastidiosa (strain 9a5c).